Reading from the N-terminus, the 126-residue chain is Acidic phospholipase A2 4 (126 aa).

Residue Ser1 is a signal peptide. Residues 2 to 7 (NRPMPL) constitute a propeptide that is removed on maturation. 7 disulfides stabilise this stretch: Cys18/Cys78, Cys33/Cys125, Cys35/Cys51, Cys50/Cys106, Cys57/Cys99, Cys67/Cys92, and Cys85/Cys97. The Ca(2+) site is built by Tyr34, Gly36, and Gly38. His54 is an active-site residue. Position 55 (Asp55) interacts with Ca(2+). The active site involves Asp100.

The protein belongs to the phospholipase A2 family. Group I subfamily. D49 sub-subfamily. As to quaternary structure, monomer. It depends on Ca(2+) as a cofactor. In terms of tissue distribution, expressed by the venom gland.

The protein localises to the secreted. It catalyses the reaction a 1,2-diacyl-sn-glycero-3-phosphocholine + H2O = a 1-acyl-sn-glycero-3-phosphocholine + a fatty acid + H(+). Its function is as follows. Snake venom phospholipase A2 (PLA2) that exhibits strong anticoagulant activity, which is not due to the catalytic activity. PLA2 catalyzes the calcium-dependent hydrolysis of the 2-acyl groups in 3-sn-phosphoglycerides. The protein is Acidic phospholipase A2 4 of Naja sagittifera (Andaman cobra).